A 699-amino-acid chain; its full sequence is MIQHPTDTPEVAADAAAEPERAAGAAGATPQPSQDAVEPAADVDAATASLAAEDDDEPVLPQVPEEAGDEVAAGPLAIGRSAIAQAVRLAPTSPGVYRMLNAASDVLYVGKAKNVKKRLASYARPTGHVVRISRMIAATVSVEIISTATETEALLLEANLIKQLRPRFNVLLRDDKSFPYILITGDHWAPQIIKHRGAQSRPGRYFGPFASVGSVNRTITALQRAFLMRSCTDAFFESRTRPCLLYQIKRCAGPCTGEIDFPGYTALVREATDFLSGRSRLVKQELAGEMEKASAELEFETAALYRDRLAALSAIQSQQGINPRTVEEADVFAIHQEGGYFCVEVFFFRTGQNWGNRAYFPRAEKTFTVEEVLAAFLAQFYDDKAPPKQILLSHRIEECELLAEALCIKSGHKVEILTPQRGEKKELVGHALTNAREALGRKLADTATQTRLLQGLVTTLKLPHTPKRIEVYDNSHIQGTNAVGAMIVAGPDGFIKNQYRKFNIRSEGITPGDDYGMMREVLERRFKRLLAPPPEAEAGKPKPDDEVPQWPDLVIIDGGRGQLNAVQEIFQALGLSTVTLMAVAKGPDRDAGRETLFMPDRLPIKLEPRDPVLYFIQRLRDEAHRFVIGSHRKLRKKDIREAGLQEIPGIGPSRKRALLHHFGTLKEIERASLGDLGKVPGISAESAKRIFDYFHPQPG.

Residues Met1–Ala51 are compositionally biased toward low complexity. Residues Met1–Val59 are disordered. In terms of domain architecture, GIY-YIG spans Thr92 to Val170. One can recognise a UVR domain in the interval Arg280–Ile315.

Belongs to the UvrC family. In terms of assembly, interacts with UvrB in an incision complex.

Its subcellular location is the cytoplasm. Functionally, the UvrABC repair system catalyzes the recognition and processing of DNA lesions. UvrC both incises the 5' and 3' sides of the lesion. The N-terminal half is responsible for the 3' incision and the C-terminal half is responsible for the 5' incision. In Rhodopseudomonas palustris (strain BisB18), this protein is UvrABC system protein C.